The chain runs to 472 residues: 3-isopropylmalate dehydratase large subunit (472 aa).

The [4Fe-4S] cluster site is built by cysteine 351, cysteine 412, and cysteine 415.

It belongs to the aconitase/IPM isomerase family. LeuC type 1 subfamily. In terms of assembly, heterodimer of LeuC and LeuD. Requires [4Fe-4S] cluster as cofactor.

It carries out the reaction (2R,3S)-3-isopropylmalate = (2S)-2-isopropylmalate. The protein operates within amino-acid biosynthesis; L-leucine biosynthesis; L-leucine from 3-methyl-2-oxobutanoate: step 2/4. Functionally, catalyzes the isomerization between 2-isopropylmalate and 3-isopropylmalate, via the formation of 2-isopropylmaleate. In Marinobacter nauticus (strain ATCC 700491 / DSM 11845 / VT8) (Marinobacter aquaeolei), this protein is 3-isopropylmalate dehydratase large subunit.